A 163-amino-acid chain; its full sequence is uncharacterized protein (163 aa).

Residues 11–31 (LSWFLLLVVVILIFFLLLSCL) form a helical membrane-spanning segment.

The protein localises to the membrane. This is an uncharacterized protein from Saccharomyces cerevisiae (strain ATCC 204508 / S288c) (Baker's yeast).